Here is a 153-residue protein sequence, read N- to C-terminus: Type II secretion system core protein G (153 aa).

A propeptide spans 1-7 (MERRQRG) (leader sequence). An N-methylphenylalanine modification is found at Phe-8. A helical membrane pass occupies residues 8–28 (FTLLEIMVVIVILGVLASLVV). Disordered regions lie at residues 68 to 91 (EQGL…PQDG) and 126 to 153 (MPDT…NGNP). A compositionally biased stretch (low complexity) spans 134 to 143 (GNWNVGNGAH). The span at 144-153 (NNGGNGNGNP) shows a compositional bias: gly residues.

Belongs to the GSP G family. Type II secretion system is composed of four main components: the outer membrane complex, the inner membrane complex, the cytoplasmic secretion ATPase and the periplasm-spanning pseudopilus. Forms homomultimers. Cleaved by the prepilin peptidase. Post-translationally, methylated by prepilin peptidase at the amino group of the N-terminal phenylalanine once the leader sequence is cleaved.

The protein resides in the cell inner membrane. In terms of biological role, core component of the type II secretion system required for the energy-dependent secretion of extracellular factors such as proteases and toxins from the periplasm. Pseudopilin (pilin-like) protein that polymerizes to form the pseudopilus. Further polymerization triggers pseudopilus growth. This Dickeya chrysanthemi (Pectobacterium chrysanthemi) protein is Type II secretion system core protein G (outG).